The sequence spans 574 residues: Adenine deaminase (574 aa).

It belongs to the metallo-dependent hydrolases superfamily. Adenine deaminase family. Requires Mn(2+) as cofactor.

The catalysed reaction is adenine + H2O + H(+) = hypoxanthine + NH4(+). The sequence is that of Adenine deaminase from Thermosipho africanus (strain TCF52B).